A 311-amino-acid polypeptide reads, in one-letter code: VQ motif-containing protein 9 (311 aa).

Low complexity predominate over residues 1–27; sequence MDKSCNSSGDSSAVSASATSSTGNNTT. The tract at residues 1-78 is disordered; sequence MDKSCNSSGD…QINQGNLHQH (78 aa). Residues 90-99 carry the VQ motif; it reads FRDVVQKLTG. 3 disordered regions span residues 103-125, 228-266, and 290-311; these read HERISAPPQQPIHHPKPQQSSRL, QQENAPPSQHNSFPPPHPPPPSSAVSQTVPTSIPAPPLF, and GQLGFPVSPTTVPLPSPKYKGH. Residues 240 to 249 are compositionally biased toward pro residues; the sequence is FPPPHPPPPS. The span at 290 to 302 shows a compositional bias: low complexity; sequence GQLGFPVSPTTVP.

As to quaternary structure, interacts (via N-terminus) with WRKY8. In terms of tissue distribution, highly expressed in roots and at lower levels in rosette leaves, cauline leaves, stems, flowers and siliques.

It localises to the nucleus. Functionally, functions as a negative regulator of salt stress response. Functions as a repressor of WRKY8 transcription factor by decreasing the DNA-binding activity of WRKY8 and acts antagonistically with WRKY8 to regulate sodium and potassium homeostasis under salt stress. The chain is VQ motif-containing protein 9 from Arabidopsis thaliana (Mouse-ear cress).